Reading from the N-terminus, the 227-residue chain is 2,3-bisphosphoglycerate-dependent phosphoglycerate mutase (227 aa).

Substrate-binding positions include 8–15, 21–22, R58, 110–113, K121, 137–138, and 181–182; these read RHGKSVWN, TG, ERMY, RR, and GN. H9 acts as the Tele-phosphohistidine intermediate in catalysis. The Proton donor/acceptor role is filled by E110.

Belongs to the phosphoglycerate mutase family. BPG-dependent PGAM subfamily.

It carries out the reaction (2R)-2-phosphoglycerate = (2R)-3-phosphoglycerate. Its pathway is carbohydrate degradation; glycolysis; pyruvate from D-glyceraldehyde 3-phosphate: step 3/5. Functionally, catalyzes the interconversion of 2-phosphoglycerate and 3-phosphoglycerate. In Chlamydia felis (strain Fe/C-56) (Chlamydophila felis), this protein is 2,3-bisphosphoglycerate-dependent phosphoglycerate mutase.